The primary structure comprises 107 residues: UPF0145 protein YbjQ (107 aa).

This sequence belongs to the UPF0145 family.

The polypeptide is UPF0145 protein YbjQ (Salmonella dublin (strain CT_02021853)).